The following is a 113-amino-acid chain: Small ribosomal subunit protein bS6 (113 aa).

The protein belongs to the bacterial ribosomal protein bS6 family.

In terms of biological role, binds together with bS18 to 16S ribosomal RNA. The protein is Small ribosomal subunit protein bS6 (rpsF) of Buchnera aphidicola subsp. Acyrthosiphon pisum (strain APS) (Acyrthosiphon pisum symbiotic bacterium).